Here is a 580-residue protein sequence, read N- to C-terminus: Sensor histidine kinase YvrG (580 aa).

The Cytoplasmic portion of the chain corresponds to 1-6 (MRLRWK). A helical membrane pass occupies residues 7–27 (FLFHFFGQMLIVILLLTVMLV). At 28–261 (ASFFYLDARF…KSFLKVVLKA (234 aa)) the chain is on the extracellular side. Residues 262–282 (MFLVMAVLFMYIIWMTVWYMF) traverse the membrane as a helical segment. Residues 283–580 (RFGLPIFHTI…TVITILFKKQ (298 aa)) are Cytoplasmic-facing. The Histidine kinase domain occupies 363–580 (GLSHDLKTPL…TVITILFKKQ (218 aa)). H366 bears the Phosphohistidine; by autocatalysis mark.

Its subcellular location is the cell membrane. It catalyses the reaction ATP + protein L-histidine = ADP + protein N-phospho-L-histidine.. In terms of biological role, member of the two-component regulatory system YvrG/YvrH that positively regulates 7 transcriptional units (wprA, wapA-yxxG, dltABCDE, sunA, sunT-bdbA-yolJ-bdbB, sigO-rsoA, and sigX-rsiX), and negatively regulates the lytABC operon. Probably activates YvrH by phosphorylation. The chain is Sensor histidine kinase YvrG (yvrG) from Bacillus subtilis (strain 168).